Consider the following 286-residue polypeptide: 4-diphosphocytidyl-2-C-methyl-D-erythritol kinase (286 aa).

K12 is an active-site residue. 96 to 106 (PHGAGLGGGSA) serves as a coordination point for ATP. D138 is a catalytic residue.

Belongs to the GHMP kinase family. IspE subfamily.

It catalyses the reaction 4-CDP-2-C-methyl-D-erythritol + ATP = 4-CDP-2-C-methyl-D-erythritol 2-phosphate + ADP + H(+). It functions in the pathway isoprenoid biosynthesis; isopentenyl diphosphate biosynthesis via DXP pathway; isopentenyl diphosphate from 1-deoxy-D-xylulose 5-phosphate: step 3/6. In terms of biological role, catalyzes the phosphorylation of the position 2 hydroxy group of 4-diphosphocytidyl-2C-methyl-D-erythritol. This Nitratidesulfovibrio vulgaris (strain ATCC 29579 / DSM 644 / CCUG 34227 / NCIMB 8303 / VKM B-1760 / Hildenborough) (Desulfovibrio vulgaris) protein is 4-diphosphocytidyl-2-C-methyl-D-erythritol kinase.